An 878-amino-acid polypeptide reads, in one-letter code: Pyruvate dehydrogenase phosphatase regulatory subunit, mitochondrial (878 aa).

Residues 1–26 (MLPRLLAVVRGPGSCRGWREGSPARG) constitute a mitochondrion transit peptide.

This sequence belongs to the GcvT family. In terms of assembly, heterodimer of a catalytic (PDP1) and a regulatory (PDPR) subunit.

The protein localises to the mitochondrion matrix. Decreases the sensitivity of PDP1 to magnesium ions, and this inhibition is reversed by the polyamine spermine. This is Pyruvate dehydrogenase phosphatase regulatory subunit, mitochondrial (PDPR) from Bos taurus (Bovine).